A 158-amino-acid chain; its full sequence is D-aminoacyl-tRNA deacylase (158 aa).

The Gly-cisPro motif, important for rejection of L-amino acids signature appears at 138–139; that stretch reads GP.

Belongs to the DTD family. In terms of assembly, homodimer.

Its subcellular location is the cytoplasm. The enzyme catalyses glycyl-tRNA(Ala) + H2O = tRNA(Ala) + glycine + H(+). It catalyses the reaction a D-aminoacyl-tRNA + H2O = a tRNA + a D-alpha-amino acid + H(+). Functionally, an aminoacyl-tRNA editing enzyme that deacylates mischarged D-aminoacyl-tRNAs. Hydrolyzes correctly charged, achiral, glycyl-tRNA(Gly). Deacylates mischarged endogenous and E.coli glycyl-tRNA(Ala), protecting cells against glycine mischarging by AlaRS. Acts via tRNA-based rather than protein-based catalysis; rejects L-amino acids rather than detecting D-amino acids in the active site. By recycling D-aminoacyl-tRNA to D-amino acids and free tRNA molecules, this enzyme counteracts the toxicity associated with the formation of D-aminoacyl-tRNA entities in vivo and helps enforce protein L-homochirality. This is D-aminoacyl-tRNA deacylase from Drosophila melanogaster (Fruit fly).